We begin with the raw amino-acid sequence, 627 residues long: Protein fem-1 homolog B (627 aa).

ANK repeat units lie at residues 45-74 (QRST…VQTQ), 87-116 (DGAT…NVNH), 120-149 (TNST…NISI), and 153-182 (YDNT…DPNA). 3 residues coordinate Zn(2+): H185, C186, and H218. 2 ANK repeats span residues 186–215 (CGAT…AIVV) and 218–248 (HGMT…DRRS). Residues 344–377 (SHPIIYRGAVYADNMEFEQCIKLWLHALHLRQKG) form a TPR repeat. ANK repeat units lie at residues 483–527 (EGFT…EVNA) and 531–568 (EGNS…HTDM).

This sequence belongs to the fem-1 family. In terms of assembly, component of a CRL2 E3 ubiquitin-protein ligase complex, also named ECS (Elongin BC-CUL2/5-SOCS-box protein) complex, composed of CUL2, Elongin BC (ELOB and ELOC), RBX1 and substrate-specific adapter FEM1B. Homooligomer. Interacts with PPM1F and PHTF1. Interacts with the death domain of FAS/TNFRSF6 and TNFRSF1A. Interacts with CHEK1. Interacts with NKX3-1. Present in adult testis (at protein level).

Its subcellular location is the cytoplasm. It is found in the nucleus. Its pathway is protein modification; protein ubiquitination. Activity of the CRL2(FEM1B) complex toward FNIP1 is inhibited by BEX family proteins (BEX1, BEX2, BEX3 and/or BEX4) in absence of reductive stress. Mechanistically, BEX proteins act as pseudosubstrate inhibitors that associate with FEM1B via zinc in absence of reductive stress, thereby preventing association between FEM1B and FNIP1. Functionally, substrate-recognition component of a Cul2-RING (CRL2) E3 ubiquitin-protein ligase complex of the DesCEND (destruction via C-end degrons) pathway, which recognizes a C-degron located at the extreme C terminus of target proteins, leading to their ubiquitination and degradation. The C-degron recognized by the DesCEND pathway is usually a motif of less than ten residues and can be present in full-length proteins, truncated proteins or proteolytically cleaved forms. The CRL2(FEM1B) complex specifically recognizes proteins ending with -Gly-Leu-Asp-Arg, such as CDK5R1, leading to their ubiquitination and degradation. Also acts as a regulator of the reductive stress response by mediating ubiquitination of reduced FNIP1: in response to reductive stress, the CRL2(FEM1B) complex specifically recognizes a conserved Cys degron in FNIP1 when this degron is reduced, leading to FNIP1 degradation and subsequent activation of mitochondria to recalibrate reactive oxygen species (ROS). Mechanistically, recognizes and binds reduced FNIP1 through two interface zinc ions, which act as a molecular glue that recruit reduced FNIP1 to FEM1B. Promotes ubiquitination of GLI1, suppressing GLI1 transcriptional activator activity. Promotes ubiquitination and degradation of ANKRD37. Promotes ubiquitination and degradation of SLBP. Involved in apoptosis by acting as a death receptor-associated protein that mediates apoptosis. Also involved in glucose homeostasis in pancreatic islet. May also act as an adapter/mediator in replication stress-induced signaling that leads to the activation of CHEK1. The protein is Protein fem-1 homolog B of Rattus norvegicus (Rat).